The following is a 156-amino-acid chain: Small ribosomal subunit protein uS7 (156 aa).

The protein belongs to the universal ribosomal protein uS7 family. Part of the 30S ribosomal subunit. Contacts proteins S9 and S11.

One of the primary rRNA binding proteins, it binds directly to 16S rRNA where it nucleates assembly of the head domain of the 30S subunit. Is located at the subunit interface close to the decoding center, probably blocks exit of the E-site tRNA. The chain is Small ribosomal subunit protein uS7 from Shewanella woodyi (strain ATCC 51908 / MS32).